Consider the following 87-residue polypeptide: uncharacterized protein (87 aa).

The helical transmembrane segment at 44–64 (DALYLAGSTIFTIVTTLVAWF) threads the bilayer.

This sequence belongs to the SPP1 holin family.

Its subcellular location is the membrane. This is an uncharacterized protein from Bacillus licheniformis.